Reading from the N-terminus, the 191-residue chain is Imidazoleglycerol-phosphate dehydratase (191 aa).

Belongs to the imidazoleglycerol-phosphate dehydratase family.

It is found in the cytoplasm. The enzyme catalyses D-erythro-1-(imidazol-4-yl)glycerol 3-phosphate = 3-(imidazol-4-yl)-2-oxopropyl phosphate + H2O. It participates in amino-acid biosynthesis; L-histidine biosynthesis; L-histidine from 5-phospho-alpha-D-ribose 1-diphosphate: step 6/9. The protein is Imidazoleglycerol-phosphate dehydratase of Thermodesulfovibrio yellowstonii (strain ATCC 51303 / DSM 11347 / YP87).